The chain runs to 546 residues: Chaperonin GroEL (546 aa).

Residues 29–32 (TMGP), Lys50, 86–90 (DGTTT), Gly414, and Asp492 contribute to the ATP site.

It belongs to the chaperonin (HSP60) family. Forms a cylinder of 14 subunits composed of two heptameric rings stacked back-to-back. Interacts with the co-chaperonin GroES.

Its subcellular location is the cytoplasm. The catalysed reaction is ATP + H2O + a folded polypeptide = ADP + phosphate + an unfolded polypeptide.. Functionally, together with its co-chaperonin GroES, plays an essential role in assisting protein folding. The GroEL-GroES system forms a nano-cage that allows encapsulation of the non-native substrate proteins and provides a physical environment optimized to promote and accelerate protein folding. This is Chaperonin GroEL from Helicobacter pylori (strain HPAG1).